A 147-amino-acid polypeptide reads, in one-letter code: MLAMSDFCTQHPLFSYAVAIVVLLAAMLGLGAVSGTRRVGAARGRSMDLPFESGVLPVGSAHLRIPVQYYLVAMLFVIFDVESVFLFSWAPVAVGAGWRGYGAVVVFVASLAAALAYVWRWGALDWGPVPRRRIDYRRAGDASCAGR.

The next 3 membrane-spanning stretches (helical) occupy residues 13–33 (LFSY…LGAV), 70–90 (YLVA…FSWA), and 104–124 (VVVF…WGAL).

The protein belongs to the complex I subunit 3 family. In terms of assembly, NDH-1 is composed of 14 different subunits. Subunits NuoA, H, J, K, L, M, N constitute the membrane sector of the complex.

Its subcellular location is the cell inner membrane. It carries out the reaction a quinone + NADH + 5 H(+)(in) = a quinol + NAD(+) + 4 H(+)(out). Functionally, NDH-1 shuttles electrons from NADH, via FMN and iron-sulfur (Fe-S) centers, to quinones in the respiratory chain. The immediate electron acceptor for the enzyme in this species is believed to be ubiquinone. Couples the redox reaction to proton translocation (for every two electrons transferred, four hydrogen ions are translocated across the cytoplasmic membrane), and thus conserves the redox energy in a proton gradient. The polypeptide is NADH-quinone oxidoreductase subunit A (Gluconacetobacter diazotrophicus (strain ATCC 49037 / DSM 5601 / CCUG 37298 / CIP 103539 / LMG 7603 / PAl5)).